The following is a 1455-amino-acid chain: Nik-related protein kinase (1455 aa).

The Protein kinase domain occupies 25–313 (FSLDKAIGLG…SGNMLLHPFV (289 aa)). ATP-binding positions include 31–39 (IGLGTYGRI) and lysine 54. Aspartate 177 acts as the Proton acceptor in catalysis. 2 disordered regions span residues 385–404 (LHGE…PQDQ) and 471–568 (TQDN…EDKE). Residues 471 to 480 (TQDNKATSPE) are compositionally biased toward polar residues. Over residues 494–505 (EALETEQPKDLD) the composition is skewed to basic and acidic residues. The segment covering 520 to 531 (QPRQGQAAEQQQ) has biased composition (low complexity). Acidic residues predominate over residues 540–568 (PPEEDREPEQAEVQEEAVEPPQAEIEDKE). Residues 716–750 (RRRHRRWEDIFNQHEEQLRRVENDREDDSSDNDEV) are a coiled coil. Disordered stretches follow at residues 760–854 (IEPH…PPYS) and 1029–1080 (AFGN…TETS). Phosphoserine occurs at positions 847 and 850. Over residues 1029–1038 (AFGNHGANRG) the composition is skewed to low complexity. Positions 1044-1078 (RNREANGRNEENGAFGRDQHVFPEFEHEESDRGTE) are enriched in basic and acidic residues. The CNH domain maps to 1138–1425 (SSEVYCGSLW…RFLCARGDKM (288 aa)).

The protein belongs to the protein kinase superfamily. STE Ser/Thr protein kinase family. STE20 subfamily.

It carries out the reaction L-seryl-[protein] + ATP = O-phospho-L-seryl-[protein] + ADP + H(+). The catalysed reaction is L-threonyl-[protein] + ATP = O-phospho-L-threonyl-[protein] + ADP + H(+). Functionally, may phosphorylate cofilin-1 and induce actin polymerization through this process, during the late stages of embryogenesis. Involved in the TNF-alpha-induced signaling pathway. This is Nik-related protein kinase (Nrk) from Mus musculus (Mouse).